The sequence spans 277 residues: MNLVPALVLLLALAQTVLGATIGHDKVQPFAQPDPVTVSEKAAVKYKPQLQISDSCVSFPAVNAAGEITGGLKGTKGTDGCTEAPLGSQVYGRSTWYQDKWAMMFAWYFPKNFWGGGAKSRHLWANMVLWIDNPALETPKILGASLSRQTLEVPKAVFLSMGEQQKDPYSKVTAIPPMGFVGMQAIQTSRISRFRYTYNYTGGSDISTRVSQGYPDNSAWISLTFAGTDGEYQDLIMWNQLTDQARAALESADFGEDTKVPFNDKNFEAALAQAWPF.

The signal sequence occupies residues 1–19 (MNLVPALVLLLALAQTVLG). The Hepta-peptide GHRHDWE motif motif lies at 119–125 (KSRHLWA). A glycan (N-linked (GlcNAc...) asparagine) is linked at asparagine 199.

Belongs to the Necrosis inducing protein (NPP1) family.

The protein resides in the secreted. Secreted effector that contributes strongly to virulence during infection by P.capsici. Induces cell death in the Solanaceae, including hot pepper. The polypeptide is NLP effector protein Pc109174 (Phytophthora capsici).